The following is a 360-amino-acid chain: DNA replication and repair protein RecF (360 aa).

30-37 (GQNGSGKT) is an ATP binding site.

This sequence belongs to the RecF family.

The protein resides in the cytoplasm. Its function is as follows. The RecF protein is involved in DNA metabolism; it is required for DNA replication and normal SOS inducibility. RecF binds preferentially to single-stranded, linear DNA. It also seems to bind ATP. The chain is DNA replication and repair protein RecF from Shewanella loihica (strain ATCC BAA-1088 / PV-4).